Reading from the N-terminus, the 173-residue chain is Thiol-disulfide oxidoreductase ResA (173 aa).

The chain crosses the membrane as a helical; Signal-anchor for type II membrane protein span at residues 10 to 29 (VIILLILSGAVGFTLYQGFF). The Thioredoxin domain maps to 35–173 (MQIGKEAPNF…LEGYLKKITP (139 aa)). Residues Cys73 and Cys76 are joined by a disulfide bond.

Belongs to the thioredoxin family. ResA subfamily.

The protein resides in the cell membrane. The protein operates within protein modification; cytochrome c assembly. Thiol-disulfide oxidoreductase which is required in disulfide reduction during c-type cytochrome synthesis. May accept reducing equivalents from CcdA, leading to breakage of disulfide bonds in apocytochrome c; following this reduction heme can be covalently attached. This chain is Thiol-disulfide oxidoreductase ResA, found in Bacillus thuringiensis (strain Al Hakam).